Reading from the N-terminus, the 261-residue chain is Neurovirulence factor ICP34.5 (261 aa).

Positions 1–17 are enriched in basic residues; sequence MSRRRGPRRRGPRRRPR. A required for nucleolar localization region spans residues 1-19; it reads MSRRRGPRRRGPRRRPRPG. Disordered regions lie at residues 1–59, 75–135, and 145–164; these read MSRR…SAPA, DSDD…LALR, and RLSL…APRG. Repeats lie at residues 3-7, 8-12, 16-23, and 24-31; these read RRRGP and PRPGAPAV. The segment at 3 to 12 is 2 X 5 AA tandem repeats of R-R-R-G-P; that stretch reads RRRGPRRRGP. A 2 X 8 AA tandem repeats of P-R-P-G-A-P-A-V region spans residues 16 to 31; that stretch reads PRPGAPAVPRPGAPAV. Positions 18–32 are enriched in pro residues; that stretch reads PGAPAVPRPGAPAVP. Residues 75 to 88 are compositionally biased toward acidic residues; sequence DSDDADYAGNDDAE. Over residues 101–111 the composition is skewed to low complexity; the sequence is APEAPHAAPAA. The Nuclear export signal motif lies at 128–137; it reads LPPHLALRLR. The interval 163 to 176 is binding to PP1CA; it reads RGKVCFSPRVQVRH. The segment at 163–176 is interaction with host PPP1CA; that stretch reads RGKVCFSPRVQVRH. Positions 178-261 are important for interferon resistance; the sequence is VAWETAARLA…AAAGPGRRAV (84 aa). The short motif at 188–206 is the Bipartite nuclear localization signal element; the sequence is RRGSWARERADRDRFRRRV. The segment at 206-221 is interaction with host EIF2S1/EIF-2ALPHA; sequence VAAAEAVIGPCLEPEA. A disordered region spans residues 223–261; that stretch reads ARARARARAHEDGGPAEEEEAAAAARGSSAAAGPGRRAV. Over residues 244–261 the composition is skewed to low complexity; the sequence is AAAARGSSAAAGPGRRAV.

Belongs to the PPP1R15 family. Interacts with host PPP1CA to form a high-molecular-weight complex that dephosphorylates EIF2S1/eIF-2alpha. Interacts with host EIF2S1/eIF-2alpha; this interaction is crucial for the specific dephosphorylation of EIF2S1/eIF-2alpha by PPP1CA.

It localises to the host cytoplasm. The protein resides in the host nucleus. It is found in the host nucleolus. The protein localises to the virion. Its function is as follows. Plays essential roles in viral nuclear egress to mediate capsid transit across the nuclear membrane and also in the inhibition of host immune response and integrated stress response (ISR). Facilitates nuclear egress cooperatively with host C1QBP and protein kinase C/PKC to induce lamin A/C phosphorylation and subsequent reorganization. In turn, lamina disassembles and nuclear egress occurs. Recruits the serine/threonine-protein phosphatase PPP1CA/PP1-alpha to dephosphorylate the translation initiation factor EIF2S1/eIF-2alpha, thereby couteracting the host shutoff of protein synthesis involving double-stranded RNA-dependent protein kinase EIF2AK2/PKR. Also down-modulates the host MHC class II proteins cell surface expression. Acts as a neurovirulence factor that has a profound effect on the growth of the virus in central nervous system tissue, probably through its ability to maintain an environment favorable for viral replication. In Human herpesvirus 2 (strain HG52) (HHV-2), this protein is Neurovirulence factor ICP34.5 (RL1).